Consider the following 445-residue polypeptide: MNRPSLKHFYIKSFGCQMNSYDGERMSELLESQGMKAAEEAATADLVVLNTCHIREKAAEKVYSEIGRLRRPDGSSPMIALAGCVAQAEGAEVLARTKMVDIVVGPQAYHHLPELIEKAASGKVVDIDMPLESKFDALPERRQVGASAFLTVQEGCDKFCTYCVVPYTRGAEVSRPWSRIVKEAHALVDKGAREITLLGQNVNAWTGEDEAGRSQGLDGLIRALAKIDGLERIRYTTSHPNDMTEGLIEAHGEIDKLMPFLHLPVQSGSNRILKAMNRAHTAESYLTLMNRLKEVRPDIALSGDFIVGFPGESEEDFQATLDLISEVGYSLAFSFAYSPRPGTPAADMDNQIDPEISRERLQRLQALLNQQQFDFNQQTIGRKATVLIERKGKKADQMIGKSPWLQSVIIEAPVAIGDLVEVTLTDAGPNSVKGQFLDQKQFATA.

The 115-residue stretch at 7 to 121 folds into the MTTase N-terminal domain; that stretch reads KHFYIKSFGC…LPELIEKAAS (115 aa). The [4Fe-4S] cluster site is built by C16, C52, C84, C156, C160, and C163. One can recognise a Radical SAM core domain in the interval 142–374; that stretch reads RQVGASAFLT…QALLNQQQFD (233 aa). The TRAM domain maps to 377-438; sequence QQTIGRKATV…PNSVKGQFLD (62 aa).

This sequence belongs to the methylthiotransferase family. MiaB subfamily. In terms of assembly, monomer. [4Fe-4S] cluster is required as a cofactor.

It is found in the cytoplasm. The catalysed reaction is N(6)-dimethylallyladenosine(37) in tRNA + (sulfur carrier)-SH + AH2 + 2 S-adenosyl-L-methionine = 2-methylsulfanyl-N(6)-dimethylallyladenosine(37) in tRNA + (sulfur carrier)-H + 5'-deoxyadenosine + L-methionine + A + S-adenosyl-L-homocysteine + 2 H(+). Functionally, catalyzes the methylthiolation of N6-(dimethylallyl)adenosine (i(6)A), leading to the formation of 2-methylthio-N6-(dimethylallyl)adenosine (ms(2)i(6)A) at position 37 in tRNAs that read codons beginning with uridine. The sequence is that of tRNA-2-methylthio-N(6)-dimethylallyladenosine synthase from Zymomonas mobilis subsp. mobilis (strain ATCC 31821 / ZM4 / CP4).